The primary structure comprises 531 residues: Cytochrome P450 monooxygenase acuC (531 aa).

A helical membrane pass occupies residues 3–23 (PIVWLLGGAIALLVVVIRAAW). Cys447 contacts heme.

Belongs to the cytochrome P450 family. Requires heme as cofactor.

Its subcellular location is the endoplasmic reticulum membrane. The catalysed reaction is 3-methylphenol + reduced [NADPH--hemoprotein reductase] + O2 = 3-hydroxybenzyl alcohol + oxidized [NADPH--hemoprotein reductase] + H2O + H(+). The protein operates within secondary metabolite biosynthesis. Its function is as follows. Cytochrome P450 monooxygenase; part of the gene cluster that mediates the biosynthesis of aculins. The pathway begins with the synthesis of 6-methylsalicylic acid by the polyketide synthase (PKS) acuA via condensation of acetate and malonate units. The 6-methylsalicylic acid decarboxylase acuB then catalyzes the decarboxylation of 6-methylsalicylic acid to yield m-cresol (also known as 3-methylphenol). These first reactions occur in the cytosol. The intermediate m-cresol is then transported into the endoplasmic reticulum where the cytochrome P450 monooxygenase acuC converts it to m-hydroxybenzyl alcohol, which is further converted to gentisyl alcohol by the cytochrome P450 monooxygenase acuD. Gentisyl alcohol is further oxidized by the oxidoreductase acuE that probably catalyzes hydroxylation of the aromatic ring. The aromatic system might then be opened by oxidation through a Baeyer-Villiger type of oxidation, which could be catalyzed by acuF, with the carboxylic acid at C-1 subsequently reduced to an aldehyde by acuG. Subsequently, a hemiacetal is formed, before the dehydrogenase acuH would reduce the double bond between C-4 and C-6. Finally, keto-enol tautomerism results in formation of aculinic acid, which exists as two diastereomers (both R/S configurations at C-1) by non-enzymatic hemiacetal formation. The carboxypeptidase acuI could be involved in the linking of aculinic acid to an aculene A moiety produced by the aculene biosynthesis cluster and which leads to the production of aculin A. AcuI may also be involved in the attachment of proline to aculinic acid to form epi-aculins A and B. This chain is Cytochrome P450 monooxygenase acuC, found in Aspergillus aculeatus (strain ATCC 16872 / CBS 172.66 / WB 5094).